A 1578-amino-acid polypeptide reads, in one-letter code: Cilia- and flagella-associated protein 74 (1578 aa).

Acidic residues predominate over residues 1-14 (MEEPTVQFSDEDLV). 2 disordered regions span residues 1–21 (MEEP…PPMD) and 33–67 (EVER…TTKD). Basic and acidic residues predominate over residues 33 to 65 (EVERPSEGLEDEGSHSSAKKESKGAEKMRKSTT). Coiled-coil stretches lie at residues 103–156 (RQRM…QSKI) and 330–378 (KYLF…RRQH).

This sequence belongs to the CFAP74 family.

It is found in the cytoplasm. The protein resides in the cytoskeleton. Its subcellular location is the cilium axoneme. It localises to the flagellum axoneme. Its function is as follows. As part of the central apparatus of the cilium axoneme may play a role in cilium movement. May play an important role in sperm architecture and function. The protein is Cilia- and flagella-associated protein 74 of Mus musculus (Mouse).